The chain runs to 160 residues: Serine-protein kinase RsbW (160 aa).

Belongs to the anti-sigma-factor family.

The enzyme catalyses L-seryl-[protein] + ATP = O-phospho-L-seryl-[protein] + ADP + H(+). It carries out the reaction L-threonyl-[protein] + ATP = O-phospho-L-threonyl-[protein] + ADP + H(+). Its function is as follows. Negative regulator of sigma-B activity. Phosphorylates and inactivates its specific antagonist protein, RsbV. Upon phosphorylation of RsbV, RsbW is released and binds to sigma-B, thereby blocking its ability to form an RNA polymerase holoenzyme (E-sigma-B). This is Serine-protein kinase RsbW from Bacillus anthracis (strain A0248).